The primary structure comprises 249 residues: (2S)-[(R)-hydroxy(phenyl)methyl]succinyl-CoA dehydrogenase subunit BbsC (249 aa).

It belongs to the short-chain dehydrogenases/reductases (SDR) family. As to quaternary structure, heterotetramer composed of 2 inactive BbsC subunits and 2 active BbsD subunits.

Its pathway is xenobiotic degradation; toluene degradation. Functionally, involved in an anaerobic toluene degradation pathway. Catalytically inactive subunit, which is probably required for the structural and/or regulatory integrity of the catalytic subunit BbsD. This subunit cannot bind NAD(+) or substrate. The protein is (2S)-[(R)-hydroxy(phenyl)methyl]succinyl-CoA dehydrogenase subunit BbsC of Thauera aromatica.